The following is a 106-amino-acid chain: UPF0145 protein Daci_3728 (106 aa).

This sequence belongs to the UPF0145 family.

This Delftia acidovorans (strain DSM 14801 / SPH-1) protein is UPF0145 protein Daci_3728.